The chain runs to 103 residues: Large ribosomal subunit protein uL23c (103 aa).

Belongs to the universal ribosomal protein uL23 family. In terms of assembly, part of the 50S ribosomal subunit.

It localises to the plastid. It is found in the chloroplast. Binds to 23S rRNA. The chain is Large ribosomal subunit protein uL23c (rpl23) from Gracilaria tenuistipitata var. liui (Red alga).